The sequence spans 1047 residues: Formin-like protein 3 (1047 aa).

G2 carries the N-myristoyl glycine lipid modification. One can recognise a GBD/FH3 domain in the interval V22–E462. The disordered stretch occupies residues A520–P561. A compositionally biased stretch (pro residues) spans A527–P546. In terms of domain architecture, FH2 spans I580–A970. In terms of domain architecture, DAD spans D1000 to C1037.

This sequence belongs to the formin homology family.

It localises to the cytoplasm. The protein localises to the cell membrane. Required for developmental angiogenesis, but not for vasculogenesis. The protein is Formin-like protein 3 (fmnl3) of Danio rerio (Zebrafish).